We begin with the raw amino-acid sequence, 192 residues long: Adenylate kinase (192 aa).

12–17 serves as a coordination point for ATP; sequence GSGKTT. Residues 34–63 form an NMP region; that stretch reads STGDLLRAEVASGSELGKTIDSFISKGNLV. AMP is bound by residues Thr35, Arg40, 61–63, 88–91, and Gln95; these read NLV and GYPR. The tract at residues 130-136 is LID; it reads GRNRGAD. Residue Arg131 coordinates ATP. Arg133 and Arg145 together coordinate AMP. Arg173 is a binding site for ATP.

Belongs to the adenylate kinase family. Monomer.

Its subcellular location is the cytoplasm. The enzyme catalyses AMP + ATP = 2 ADP. It participates in purine metabolism; AMP biosynthesis via salvage pathway; AMP from ADP: step 1/1. In terms of biological role, catalyzes the reversible transfer of the terminal phosphate group between ATP and AMP. Plays an important role in cellular energy homeostasis and in adenine nucleotide metabolism. This chain is Adenylate kinase, found in Campylobacter jejuni subsp. jejuni serotype O:6 (strain 81116 / NCTC 11828).